The chain runs to 417 residues: Gamma-glutamyl phosphate reductase (417 aa).

The protein belongs to the gamma-glutamyl phosphate reductase family.

It is found in the cytoplasm. It catalyses the reaction L-glutamate 5-semialdehyde + phosphate + NADP(+) = L-glutamyl 5-phosphate + NADPH + H(+). The protein operates within amino-acid biosynthesis; L-proline biosynthesis; L-glutamate 5-semialdehyde from L-glutamate: step 2/2. Its function is as follows. Catalyzes the NADPH-dependent reduction of L-glutamate 5-phosphate into L-glutamate 5-semialdehyde and phosphate. The product spontaneously undergoes cyclization to form 1-pyrroline-5-carboxylate. This Escherichia coli O127:H6 (strain E2348/69 / EPEC) protein is Gamma-glutamyl phosphate reductase.